A 271-amino-acid chain; its full sequence is Uridine-cytidine kinase 1-A (271 aa).

24–32 (GGTASGKST) is an ATP binding site. Residues aspartate 81, tyrosine 109, histidine 114, arginine 163, arginine 172, and glutamine 180 each coordinate substrate. Aspartate 209 contacts ATP. Residues 241-271 (SQKRTFPGQGESGGLILPGKRTHLESSSRPH) are disordered. Residues 262–271 (THLESSSRPH) show a composition bias toward basic and acidic residues.

This sequence belongs to the uridine kinase family.

The catalysed reaction is uridine + ATP = UMP + ADP + H(+). It carries out the reaction cytidine + ATP = CMP + ADP + H(+). The protein operates within pyrimidine metabolism; CTP biosynthesis via salvage pathway; CTP from cytidine: step 1/3. It participates in pyrimidine metabolism; UMP biosynthesis via salvage pathway; UMP from uridine: step 1/1. Phosphorylates uridine and cytidine to uridine monophosphate and cytidine monophosphate. Does not phosphorylate deoxyribonucleosides or purine ribonucleosides. Can use ATP or GTP as a phosphate donor. The protein is Uridine-cytidine kinase 1-A (uck1-a) of Xenopus laevis (African clawed frog).